The sequence spans 210 residues: Probable GTP-binding protein EngB (210 aa).

The 176-residue stretch at 24-199 (QGCEVAFAGR…WEVLGRWLDL (176 aa)) folds into the EngB-type G domain. GTP contacts are provided by residues 32–39 (GRSNAGKS), 59–63 (GRTRM), 77–80 (DLPG), 144–147 (TKSD), and 178–180 (FSS). Mg(2+)-binding residues include Ser39 and Thr61.

It belongs to the TRAFAC class TrmE-Era-EngA-EngB-Septin-like GTPase superfamily. EngB GTPase family. Mg(2+) is required as a cofactor.

Necessary for normal cell division and for the maintenance of normal septation. In Methylococcus capsulatus (strain ATCC 33009 / NCIMB 11132 / Bath), this protein is Probable GTP-binding protein EngB.